We begin with the raw amino-acid sequence, 761 residues long: Proton-coupled zinc antiporter SLC30A5 (761 aa).

M1 is modified (N-acetylmethionine). The Cytoplasmic portion of the chain corresponds to 1–29 (MEEKYGGDARPGPGGGLGPVDVPSARLTR). Residues 30–46 (YILLLCLTKCLKAVGLF) traverse the membrane as a helical segment. Residues 47–54 (ESYDLLKA) lie on the Lumenal side of the membrane. Residues 55–75 (VHIVQFIFILKLGTAFFMVLF) traverse the membrane as a helical segment. Residues 76–96 (QKPFSSGKPITKHQWIKIFKH) lie on the Cytoplasmic side of the membrane. A helical membrane pass occupies residues 97 to 117 (AVAGCIISLLWFFGLTLCGPL). R118 is a topological domain (lumenal). The helical transmembrane segment at 119–139 (TLLLFEHSDIVVISLLSVLFT) threads the bilayer. Over 140 to 150 (SSGGGPAKTRG) the chain is Cytoplasmic. A helical transmembrane segment spans residues 151–171 (AAFFIIAVICLLLFDNDDLMA). Over 172 to 191 (KMAEHPEGHHDSALTHMLYT) the chain is Lumenal. A helical transmembrane segment spans residues 192–212 (AIAFLGVADHKGGVLLLVLAL). The Cytoplasmic portion of the chain corresponds to 213 to 236 (CCKVGFHTASRKLSIDVGGAKRLQ). Residues 237 to 257 (ALSQLVSVFLLCPWVIVLSVT) form a helical membrane-spanning segment. Residues 258-264 (TESKVES) are Lumenal-facing. The helical transmembrane segment at 265 to 285 (WFSLIMPFTTVIFFVMILDFY) threads the bilayer. The Cytoplasmic portion of the chain corresponds to 286–301 (MDSVCSVKMDVSKCAR). The chain crosses the membrane as a helical span at residues 302 to 322 (YGSFPIFISALLFGNFWTHPI). At 323-340 (TDQLRAMNRAAHQESTEH) the chain is on the lumenal side. Residues 341–361 (VLSGGVVVSAVFFILSANILS) form a helical membrane-spanning segment. Topologically, residues 362 to 416 (SPSKRGQKGTLIGYSPEGTPLYHFMGDAFQHSSQSVPRFIKDSLKQVLEESDSRQ) are cytoplasmic. A helical transmembrane segment spans residues 417–437 (IFYFLCLNLLFTFVELFYGVL). The tract at residues 418–636 (FYFLCLNLLF…VLIFLSVIPL (219 aa)) is mediates homodimerization with SLC30A6. Residues 438-446 (TNSLGLISD) lie on the Lumenal side of the membrane. A helical membrane pass occupies residues 447–467 (GFHMLFDCSALVMGLFAALMS). H449 and D453 together coordinate Zn(2+). Topologically, residues 468–481 (RWKATRIFSYGYGR) are cytoplasmic. A helical transmembrane segment spans residues 482–502 (IEILSGFINGLFLIVIAFFVF). At 503-518 (MESVARLIDPPELDTN) the chain is on the lumenal side. The helical transmembrane segment at 519–539 (MLTPVSVGGLIVNLIGICAFS) threads the bilayer. Positions 540–574 (HAHSHGHGASQGNCHSDHGHSHHAHGHGHDHGHSH) are his-rich loop; required for zinc transport. At 540-588 (HAHSHGHGASQGNCHSDHGHSHHAHGHGHDHGHSHGFTGGGMNANMRGV) the chain is on the cytoplasmic side. A disordered region spans residues 549–576 (SQGNCHSDHGHSHHAHGHGHDHGHSHGF). A helical transmembrane segment spans residues 589 to 609 (FLHVLADTLGSIGVIVSTVLI). H591 and D595 together coordinate Zn(2+). Residues 610 to 613 (EQFG) lie on the Lumenal side of the membrane. A helical membrane pass occupies residues 614 to 634 (WFIADPLCSLFIAVLIFLSVI). At 635-761 (PLIKDACQVL…KYCKDGTYIM (127 aa)) the chain is on the cytoplasmic side.

Belongs to the cation diffusion facilitator (CDF) transporter (TC 2.A.4) family. SLC30A subfamily. In terms of assembly, heterodimer with SLC30A6/ZNT6; form a functional zinc ion transmembrane transporter. Post-translationally, could homodimerize through the formation of dityrosine bonds upon oxidative stress. In terms of tissue distribution, ubiquitously expressed.

It localises to the golgi apparatus. It is found in the golgi stack membrane. Its subcellular location is the cytoplasmic vesicle. The protein resides in the COPII-coated vesicle membrane. The protein localises to the secretory vesicle membrane. It localises to the trans-Golgi network membrane. It carries out the reaction Zn(2+)(in) + 2 H(+)(out) = Zn(2+)(out) + 2 H(+)(in). In terms of biological role, together with SLC30A6 forms a functional proton-coupled zinc ion antiporter mediating zinc entry into the lumen of organelles along the secretory pathway. By contributing to zinc ion homeostasis within the early secretory pathway, regulates the activation and folding of enzymes like alkaline phosphatases and enzymes involved in phosphatidylinositol glycan anchor biosynthesis. Through the transport of zinc into secretory granules of pancreatic beta-cells, plays an important role in the storage and secretion of insulin. This is Proton-coupled zinc antiporter SLC30A5 from Mus musculus (Mouse).